A 931-amino-acid polypeptide reads, in one-letter code: Bifunctional uridylyltransferase/uridylyl-removing enzyme (931 aa).

Residues 1 to 383 form a uridylyltransferase region; that stretch reads MDSVTPNSRP…KTGNSWRRVP (383 aa). The segment at 384–739 is uridylyl-removing; that stretch reads ESDDFIVDNN…VGFDPARGVT (356 aa). The 124-residue stretch at 499–622 folds into the HD domain; sequence VDEHLIRCIG…VQSVEQMKLL (124 aa). 2 consecutive ACT domains span residues 740-822 and 851-931; these read ELTI…AVAR and VIEV…QPAA.

Belongs to the GlnD family. Mg(2+) serves as cofactor.

It carries out the reaction [protein-PII]-L-tyrosine + UTP = [protein-PII]-uridylyl-L-tyrosine + diphosphate. It catalyses the reaction [protein-PII]-uridylyl-L-tyrosine + H2O = [protein-PII]-L-tyrosine + UMP + H(+). With respect to regulation, uridylyltransferase (UTase) activity is inhibited by glutamine, while glutamine activates uridylyl-removing (UR) activity. Modifies, by uridylylation and deuridylylation, the PII regulatory proteins (GlnB and homologs), in response to the nitrogen status of the cell that GlnD senses through the glutamine level. Under low glutamine levels, catalyzes the conversion of the PII proteins and UTP to PII-UMP and PPi, while under higher glutamine levels, GlnD hydrolyzes PII-UMP to PII and UMP (deuridylylation). Thus, controls uridylylation state and activity of the PII proteins, and plays an important role in the regulation of nitrogen fixation and metabolism. In Bradyrhizobium sp. (strain BTAi1 / ATCC BAA-1182), this protein is Bifunctional uridylyltransferase/uridylyl-removing enzyme.